The sequence spans 176 residues: Ferritin heavy polypeptide-like 17E (176 aa).

The Ferritin-like diiron domain occupies 10–159 (QNYDWQCEDA…GYLTNLRQMG (150 aa)). 3 residues coordinate Fe cation: Cys-27, Glu-107, and Gln-141.

This sequence belongs to the ferritin family. In terms of tissue distribution, expressed in the testes and spermatogonia.

This chain is Ferritin heavy polypeptide-like 17E, found in Mus musculus (Mouse).